The chain runs to 261 residues: Triosephosphate isomerase (261 aa).

10 to 12 (NWK) contributes to the substrate binding site. The active-site Electrophile is His100. Glu172 (proton acceptor) is an active-site residue. Substrate contacts are provided by residues Gly178, Ser218, and 239–240 (GG).

It belongs to the triosephosphate isomerase family. As to quaternary structure, homodimer.

It is found in the cytoplasm. The enzyme catalyses D-glyceraldehyde 3-phosphate = dihydroxyacetone phosphate. The protein operates within carbohydrate biosynthesis; gluconeogenesis. It functions in the pathway carbohydrate degradation; glycolysis; D-glyceraldehyde 3-phosphate from glycerone phosphate: step 1/1. In terms of biological role, involved in the gluconeogenesis. Catalyzes stereospecifically the conversion of dihydroxyacetone phosphate (DHAP) to D-glyceraldehyde-3-phosphate (G3P). The chain is Triosephosphate isomerase from Mycobacteroides abscessus (strain ATCC 19977 / DSM 44196 / CCUG 20993 / CIP 104536 / JCM 13569 / NCTC 13031 / TMC 1543 / L948) (Mycobacterium abscessus).